The sequence spans 158 residues: 6,7-dimethyl-8-ribityllumazine synthase (158 aa).

Residues phenylalanine 22, 57-59 (AYE), and 84-86 (TVI) contribute to the 5-amino-6-(D-ribitylamino)uracil site. A (2S)-2-hydroxy-3-oxobutyl phosphate-binding site is contributed by 89-90 (GT). Histidine 92 serves as the catalytic Proton donor. Phenylalanine 117 contacts 5-amino-6-(D-ribitylamino)uracil. Residue arginine 131 participates in (2S)-2-hydroxy-3-oxobutyl phosphate binding.

It belongs to the DMRL synthase family. As to quaternary structure, forms an icosahedral capsid composed of 60 subunits, arranged as a dodecamer of pentamers.

It catalyses the reaction (2S)-2-hydroxy-3-oxobutyl phosphate + 5-amino-6-(D-ribitylamino)uracil = 6,7-dimethyl-8-(1-D-ribityl)lumazine + phosphate + 2 H2O + H(+). It participates in cofactor biosynthesis; riboflavin biosynthesis; riboflavin from 2-hydroxy-3-oxobutyl phosphate and 5-amino-6-(D-ribitylamino)uracil: step 1/2. Functionally, catalyzes the formation of 6,7-dimethyl-8-ribityllumazine by condensation of 5-amino-6-(D-ribitylamino)uracil with 3,4-dihydroxy-2-butanone 4-phosphate. This is the penultimate step in the biosynthesis of riboflavin. The protein is 6,7-dimethyl-8-ribityllumazine synthase of Pectobacterium atrosepticum (strain SCRI 1043 / ATCC BAA-672) (Erwinia carotovora subsp. atroseptica).